Reading from the N-terminus, the 456-residue chain is MSWSVLEALRKDPEILRENLRRRFLPLDMLERAIELDRKWREAVTELNSLRERRNEINRSIPRADPGEREELIRKAKEIGEEIERLEDVLEKLSQERDSILMSMPALIDDSVPIGPNEDYNKPIRFWGKPKVPRSKLDSFMEQTRGFNVEYELIDWEPLGHADELEVMLKQVDTVKAGQLAGSRFFYLFKDIVWLEQALILFALDKISRKGFIPVIPPYMMRRDYYLGVVDLNTFEDSIYKVEGEDLYLIATSEHPLVAMHAGDTFTEDELPRLYVGLSPCFRKEAGTHGKDTKGIFRVHQFTKVEQIVFSKPEESKYWHERLIENAEEIYRELEIPYRIVNIASGDLGASAAKKYDLEGWFPAQGKYRELVSCSNCVDWQSYRLRIKLDRKGRREFVHTLNSTALATTRTISAIVENHQREDGSVRIPKALRKYLEIFEQAPKEEIVPIEKILKE.

252 to 254 is an L-serine binding site; sequence TSE. Residues 283 to 285 and Val299 each bind ATP; that span reads RKE. Glu306 serves as a coordination point for L-serine. 370–373 provides a ligand contact to ATP; sequence ELVS. Position 404 (Thr404) interacts with L-serine.

This sequence belongs to the class-II aminoacyl-tRNA synthetase family. Type-1 seryl-tRNA synthetase subfamily. In terms of assembly, homodimer. The tRNA molecule binds across the dimer.

Its subcellular location is the cytoplasm. The catalysed reaction is tRNA(Ser) + L-serine + ATP = L-seryl-tRNA(Ser) + AMP + diphosphate + H(+). It carries out the reaction tRNA(Sec) + L-serine + ATP = L-seryl-tRNA(Sec) + AMP + diphosphate + H(+). Its pathway is aminoacyl-tRNA biosynthesis; selenocysteinyl-tRNA(Sec) biosynthesis; L-seryl-tRNA(Sec) from L-serine and tRNA(Sec): step 1/1. In terms of biological role, catalyzes the attachment of serine to tRNA(Ser). Is also able to aminoacylate tRNA(Sec) with serine, to form the misacylated tRNA L-seryl-tRNA(Sec), which will be further converted into selenocysteinyl-tRNA(Sec). The polypeptide is Serine--tRNA ligase (Korarchaeum cryptofilum (strain OPF8)).